The following is a 248-amino-acid chain: MASSFSTQLVQSQNLLPRFHAVQGKPHVVSSIGCSKLSSTYHYAPRLSVSQQSKAKSITSRRITCASGAQGEVAELQAKVTSKIFFDIEIGGESAGRIVIGLFGDAVPKTVENFKTLSTGAKGYGYQGSFFHRIIPNFMIQGGDFTEGNGTGGVSIYGSKFEDESFDLKHVGPGVLSMANAGPNTNGSQFFICTVPTPWLDNRHVVFGHVIEGLDVVKQLESQETSKLDNSPKKPCKIAKSGELPLDG.

A PPIase cyclophilin-type domain is found at 85-243; the sequence is FFDIEIGGES…KPCKIAKSGE (159 aa). A disordered region spans residues 223 to 248; sequence QETSKLDNSPKKPCKIAKSGELPLDG.

This sequence belongs to the cyclophilin-type PPIase family. In terms of tissue distribution, highly expressed in leaf.

It localises to the plastid. The protein localises to the chloroplast stroma. The catalysed reaction is [protein]-peptidylproline (omega=180) = [protein]-peptidylproline (omega=0). With respect to regulation, binds cyclosporin A (CsA). CsA mediates some of its effects via an inhibitory action on PPIase. PPIases accelerate the folding of proteins. It catalyzes the cis-trans isomerization of proline imidic peptide bonds in oligopeptides. In Vicia faba (Broad bean), this protein is Peptidyl-prolyl cis-trans isomerase, chloroplastic.